Consider the following 205-residue polypeptide: Small ribosomal subunit protein uS4 (205 aa).

Residues 1–16 (MSKRETTKYKIDRRMG) show a composition bias toward basic and acidic residues. Residues 1–46 (MSKRETTKYKIDRRMGENIWGRPKSPVNRRDYGPGQHGQRRKGKLS) are disordered. In terms of domain architecture, S4 RNA-binding spans 94 to 157 (SRLDAVVYRA…KQLVLVLESV (64 aa)).

It belongs to the universal ribosomal protein uS4 family. In terms of assembly, part of the 30S ribosomal subunit. Contacts protein S5. The interaction surface between S4 and S5 is involved in control of translational fidelity.

One of the primary rRNA binding proteins, it binds directly to 16S rRNA where it nucleates assembly of the body of the 30S subunit. In terms of biological role, with S5 and S12 plays an important role in translational accuracy. In Bartonella tribocorum (strain CIP 105476 / IBS 506), this protein is Small ribosomal subunit protein uS4.